Consider the following 126-residue polypeptide: Small ribosomal subunit protein uS11 (126 aa).

The protein belongs to the universal ribosomal protein uS11 family. Part of the 30S ribosomal subunit.

Its function is as follows. Located on the platform of the 30S subunit. This is Small ribosomal subunit protein uS11 from Methanosarcina acetivorans (strain ATCC 35395 / DSM 2834 / JCM 12185 / C2A).